The chain runs to 284 residues: 2,3,4,5-tetrahydropyridine-2,6-dicarboxylate N-succinyltransferase (284 aa).

Positions 111 and 148 each coordinate substrate.

The protein belongs to the transferase hexapeptide repeat family. As to quaternary structure, homotrimer.

The protein resides in the cytoplasm. The catalysed reaction is (S)-2,3,4,5-tetrahydrodipicolinate + succinyl-CoA + H2O = (S)-2-succinylamino-6-oxoheptanedioate + CoA. It functions in the pathway amino-acid biosynthesis; L-lysine biosynthesis via DAP pathway; LL-2,6-diaminopimelate from (S)-tetrahydrodipicolinate (succinylase route): step 1/3. The protein is 2,3,4,5-tetrahydropyridine-2,6-dicarboxylate N-succinyltransferase of Brucella melitensis biotype 2 (strain ATCC 23457).